The chain runs to 235 residues: Serine protease SplA (235 aa).

An N-terminal signal peptide occupies residues 1–35 (MNKNVMVKGLTALDILTSLGCAENISDQPHSIAKA). Catalysis depends on charge relay system residues His74, Asp113, and Ser189.

This sequence belongs to the peptidase S1B family.

The protein localises to the secreted. The protein is Serine protease SplA (splA) of Staphylococcus aureus.